Here is a 791-residue protein sequence, read N- to C-terminus: Pleckstrin homology domain-containing family H member 3 (791 aa).

Positions 1 to 18 (MPLPGGLWWLLCCRRGFT) are cleaved as a signal peptide. Acidic residues predominate over residues 29–41 (LSGDGDEDEDDET). A disordered region spans residues 29–71 (LSGDGDEDEDDETFELRSPSPAGGGRGSLDVTLTQPTRNGPIT). The residue at position 30 (serine 30) is a Phosphoserine. The span at 59-71 (VTLTQPTRNGPIT) shows a compositional bias: polar residues. In terms of domain architecture, PH spans 95–199 (DVIVKGWLYR…WGVALREVIA (105 aa)). A MyTH4 domain is found at 237–399 (HTSSALYAPL…PSLAEISALS (163 aa)). An FERM domain is found at 404–755 (LLCTVHCPGA…ANPSPERPCS (352 aa)). Low complexity predominate over residues 549 to 559 (PRGPLPLLDRL). 2 disordered regions span residues 549–580 (PRGPLPLLDRLMPPPAPPREQPSRPARRPPPS) and 593–623 (LAKRRAERARRIGTGRSTESTAQVGGGGGGS). Over residues 594–605 (AKRRAERARRIG) the composition is skewed to basic residues. The residue at position 636 (arginine 636) is an Omega-N-methylarginine. The tract at residues 748-791 (PSPERPCSSSGPPSQDLSDTSPPSQHQVLEKPQGQSGCLRQLQD) is disordered. A compositionally biased stretch (polar residues) spans 754-791 (CSSSGPPSQDLSDTSPPSQHQVLEKPQGQSGCLRQLQD).

The polypeptide is Pleckstrin homology domain-containing family H member 3 (Plekhh3) (Rattus norvegicus (Rat)).